The primary structure comprises 239 residues: MDIKLKDFEGPLDLLLHLVSKYQVDIYEVPITEVIEQYLAYIATLQAMRLEVAGEYMLMASQLMVIKSRRLLPKVVEQIDPEDDPEMDLLDQLEEYRKFKLLSEKLGEQHDERANYFSKPKLDLIYDDVQLAKDKTVIDIFLAFSKVMAEKQASLRQSHATIARDEYKIEDMMDFVRSRFETGPRLELRQLFQESQDVNEMITIFLATLELVKVHEIVLEQTETFGDIYLVRSEDESLS.

The protein belongs to the ScpA family. As to quaternary structure, component of a cohesin-like complex composed of ScpA, ScpB and the Smc homodimer, in which ScpA and ScpB bind to the head domain of Smc. The presence of the three proteins is required for the association of the complex with DNA.

The protein resides in the cytoplasm. Its function is as follows. Participates in chromosomal partition during cell division. May act via the formation of a condensin-like complex containing Smc and ScpB that pull DNA away from mid-cell into both cell halves. This is Segregation and condensation protein A from Streptococcus suis (strain 98HAH33).